A 228-amino-acid chain; its full sequence is Elongation factor 1-beta 1 (228 aa).

The residue at position 2 (Ala2) is an N-acetylalanine. The GST C-terminal domain occupies 14-65; it reads LKTLEEHLAGKTYISGDQLSVDDVKVYAAVLENPGDGFPNASKWYDSVASHL. Positions 75–139 are disordered; that stretch reads GVRVGGGVAP…DTKKTKESGK (65 aa). The span at 95 to 115 shows a compositional bias: acidic residues; that stretch reads PAADGDGDDDDDIDLFADETE. Basic and acidic residues predominate over residues 116-138; that stretch reads DEKKAAEEREAAKKDTKKTKESG.

The protein belongs to the EF-1-beta/EF-1-delta family. EF-1 is composed of 4 subunits: alpha, beta (1B-alpha=beta'), delta (1B-beta), and gamma (1B-gamma).

Its subcellular location is the cell membrane. Functionally, EF-1-beta and EF-1-delta stimulate the exchange of GDP bound to EF-1-alpha to GTP. This Arabidopsis thaliana (Mouse-ear cress) protein is Elongation factor 1-beta 1.